The following is a 101-amino-acid chain: Guanyl-specific ribonuclease Po1 (101 aa).

Glutamine 1 carries the pyrrolidone carboxylic acid modification. Disulfide bonds link cysteine 7-cysteine 84, cysteine 9-cysteine 99, and cysteine 48-cysteine 82. Histidine 36 is a catalytic residue. Glutamate 54 (proton acceptor) is an active-site residue. The active-site Proton donor is the histidine 87.

Belongs to the ribonuclease N1/T1 family.

It carries out the reaction [RNA] containing guanosine + H2O = an [RNA fragment]-3'-guanosine-3'-phosphate + a 5'-hydroxy-ribonucleotide-3'-[RNA fragment].. Its activity is regulated as follows. Inhibited by divalent cations. Inhibition decreases in the order zinc, lead, cadmium, nickel, mercury. The sequence is that of Guanyl-specific ribonuclease Po1 from Pleurotus ostreatus (Oyster mushroom).